A 338-amino-acid polypeptide reads, in one-letter code: RNA 3'-terminal phosphate cyclase (338 aa).

Residues Gln-103 and 283–287 (YLADQ) each bind ATP. The Tele-AMP-histidine intermediate role is filled by His-308.

This sequence belongs to the RNA 3'-terminal cyclase family. Type 1 subfamily.

It is found in the cytoplasm. The enzyme catalyses a 3'-end 3'-phospho-ribonucleotide-RNA + ATP = a 3'-end 2',3'-cyclophospho-ribonucleotide-RNA + AMP + diphosphate. Catalyzes the conversion of 3'-phosphate to a 2',3'-cyclic phosphodiester at the end of RNA. The mechanism of action of the enzyme occurs in 3 steps: (A) adenylation of the enzyme by ATP; (B) transfer of adenylate to an RNA-N3'P to produce RNA-N3'PP5'A; (C) and attack of the adjacent 2'-hydroxyl on the 3'-phosphorus in the diester linkage to produce the cyclic end product. The biological role of this enzyme is unknown but it is likely to function in some aspects of cellular RNA processing. This Escherichia coli O127:H6 (strain E2348/69 / EPEC) protein is RNA 3'-terminal phosphate cyclase.